A 99-amino-acid polypeptide reads, in one-letter code: Large ribosomal subunit protein eL30 (99 aa).

This sequence belongs to the eukaryotic ribosomal protein eL30 family.

The protein is Large ribosomal subunit protein eL30 (rpl30e) of Pyrococcus horikoshii (strain ATCC 700860 / DSM 12428 / JCM 9974 / NBRC 100139 / OT-3).